The sequence spans 349 residues: MKSVLYLYILFLSCIIINGRDAAPYTPPNGKCKDTEYKRHNLCCLSCPPGTYASRLCDSKTNTQCTPCGSGTFTSRNNHLPACLSCNGRCNSNQVETRSCNTTHNRICECSPGYYCLLKGSSGCKACVSQTKCGIGYGVSGHTSVGDVICSPCGFGTYSHTVSSADKCEPVPNNTFNYIDVEITLYPVNDTSCTRTTTTGLSESILTSELTITMNHTDCNPVFREEYFSVLNKVATSGFFTGENRYQNISKVCTLNFEIKCNNKGSSFKQLTKAKNDDGMMSHSETVTLAGDCLSSVDIYILYSNTNAQDYETDTISYRVGNVLDDDSHMPGSCNIHKPITNSKPTRFL.

The signal sequence occupies residues 1 to 22; the sequence is MKSVLYLYILFLSCIIINGRDA. Positions 1 to 160 are TNF-binding; the sequence is MKSVLYLYIL…SPCGFGTYSH (160 aa). TNFR-Cys repeat units follow at residues 31–66 and 67–108; these read KCKD…TQCT and PCGS…NRIC. Cystine bridges form between C32–C43, C44–C57, C47–C65, C68–C83, C86–C100, and C90–C108. N101, N173, N189, N215, and N248 each carry an N-linked (GlcNAc...) asparagine; by host glycan. Residues 161–349 form a chemokine-binding region; sequence TVSSADKCEP…ITNSKPTRFL (189 aa).

It belongs to the orthopoxvirus OPG002 family. As to quaternary structure, homodimer. Interacts with host TNF, LTA, CCL28, CCL25, CXCL12, CXCL13 and CXCl14.

It localises to the secreted. Inhibits host immune defense by binding to host TNF and various chemokines in the extracellular space. Binds host CC chemokines (beta chemokines) and CXC chemokines (alpha chemokines). This chain is Cytokine response-modifying protein B (OPG002), found in Variola virus (isolate Human/India/Ind3/1967) (VARV).